A 265-amino-acid chain; its full sequence is MSDILNTILARKADEVAERSARVPLAELIARSADLPLTRGFAAAMQASIAAGDPAVIAEVKKASPSKGVIRPDFQPADIAVSYEFGGATCLSVLTDVDFFQGSDAYLRQARDACTLPVLRKDFTVDPYQVYEARVLGADCILLIVSALEDAQLADLSGLAMQLGLDVLVEVHDIDELERAVQVPVPLIGINNRNLRTFEVTLQTTLDMRSAVPRDRVLVTESGIVTQADVQRMRSHDVNAFLVGETFMRAAEPGESLRQLFFAHD.

The protein belongs to the TrpC family.

It carries out the reaction 1-(2-carboxyphenylamino)-1-deoxy-D-ribulose 5-phosphate + H(+) = (1S,2R)-1-C-(indol-3-yl)glycerol 3-phosphate + CO2 + H2O. It functions in the pathway amino-acid biosynthesis; L-tryptophan biosynthesis; L-tryptophan from chorismate: step 4/5. In Xanthomonas axonopodis pv. citri (strain 306), this protein is Indole-3-glycerol phosphate synthase.